Consider the following 348-residue polypeptide: Putative methylthioribose-1-phosphate isomerase (348 aa).

Residues 55-57 (RGA), Arg98, and Gln203 each bind substrate. The active-site Proton donor is the Asp244. Residue 253-254 (NK) participates in substrate binding.

This sequence belongs to the eIF-2B alpha/beta/delta subunits family. MtnA subfamily.

It catalyses the reaction 5-(methylsulfanyl)-alpha-D-ribose 1-phosphate = 5-(methylsulfanyl)-D-ribulose 1-phosphate. In terms of biological role, catalyzes the interconversion of methylthioribose-1-phosphate (MTR-1-P) into methylthioribulose-1-phosphate (MTRu-1-P). This chain is Putative methylthioribose-1-phosphate isomerase, found in Methanosarcina acetivorans (strain ATCC 35395 / DSM 2834 / JCM 12185 / C2A).